We begin with the raw amino-acid sequence, 321 residues long: XylDLEGF operon transcriptional activator 1 (321 aa).

An HTH araC/xylS-type domain is found at 214–315 (ERVVQFIEEN…GELPSDTLRQ (102 aa)). DNA-binding regions (H-T-H motif) lie at residues 231–252 (ERLA…EKHA) and 282–305 (ITEI…RSAF).

The protein resides in the cytoplasm. Regulatory protein of the TOL plasmid xyl operons. XylS activates the xylXYZLTEGFJQKIH operon required for the degradation of toluene, m-xylene and p-xylene. The sequence is that of XylDLEGF operon transcriptional activator 1 (xylS1) from Pseudomonas putida (Arthrobacter siderocapsulatus).